The sequence spans 407 residues: Imidazolonepropionase (407 aa).

The Fe(3+) site is built by H73 and H75. H73 and H75 together coordinate Zn(2+). 3 residues coordinate 4-imidazolone-5-propanoate: R82, Y145, and H178. Residue Y145 coordinates N-formimidoyl-L-glutamate. H243 serves as a coordination point for Fe(3+). Residue H243 coordinates Zn(2+). Position 246 (Q246) interacts with 4-imidazolone-5-propanoate. A Fe(3+)-binding site is contributed by D318. D318 is a binding site for Zn(2+). N-formimidoyl-L-glutamate-binding residues include N320 and G322. 4-imidazolone-5-propanoate is bound at residue T323.

It belongs to the metallo-dependent hydrolases superfamily. HutI family. Requires Zn(2+) as cofactor. The cofactor is Fe(3+).

It localises to the cytoplasm. It carries out the reaction 4-imidazolone-5-propanoate + H2O = N-formimidoyl-L-glutamate. It participates in amino-acid degradation; L-histidine degradation into L-glutamate; N-formimidoyl-L-glutamate from L-histidine: step 3/3. Functionally, catalyzes the hydrolytic cleavage of the carbon-nitrogen bond in imidazolone-5-propanoate to yield N-formimidoyl-L-glutamate. It is the third step in the universal histidine degradation pathway. This Serratia proteamaculans (strain 568) protein is Imidazolonepropionase.